The following is a 512-amino-acid chain: FAD-dependent monooxygenase prx3 (512 aa).

The N-terminal stretch at 1–19 is a signal peptide; it reads MLSLKAFLALSLSIHLSQG. The 173-residue stretch at 63-235 folds into the FAD-binding PCMH-type domain; that stretch reads CQTTPTCVFA…TRFDLATFSV (173 aa). Pros-8alpha-FAD histidine is present on His100. N-linked (GlcNAc...) asparagine glycans are attached at residues Asn197, Asn281, Asn307, Asn329, Asn361, and Asn477.

The protein belongs to the oxygen-dependent FAD-linked oxidoreductase family.

It participates in sesquiterpene biosynthesis. Its function is as follows. FAD-dependent monooxygenase; part of the gene cluster that mediates the biosynthesis of PR-toxin, a bicyclic sesquiterpene belonging to the eremophilane class and acting as a mycotoxin. The first step of the pathway is catalyzed by the aristolochene synthase which performs the cyclization of trans,trans-farnesyl diphosphate (FPP) to the bicyclic sesquiterpene aristolochene. Following the formation of aristolochene, the non-oxygenated aristolochene is converted to the trioxygenated intermediate eremofortin B, via 7-epi-neopetasone. This conversion appears to involve three enzymes, a hydroxysterol oxidase-like enzyme, the quinone-oxidase prx3 that forms the quinone-type-structure in the bicyclic nucleus of aristolochene with the C8-oxo group and the C-3 hydroxyl group, and the P450 monooxygenase ORF6 that introduces the epoxide at the double bond between carbons 1 and 2. No monoxy or dioxy-intermediates have been reported to be released to the broth, so these three early oxidative reactions may be coupled together. Eremofortin B is further oxidized by another P450 monooxygenase, that introduces a second epoxide between carbons 7 and 11 prior to acetylation to eremofortin A by the acetyltransferase ORF8. The second epoxidation may be performed by a second P450 monooxygenase. After the acetylation step, eremofortin A is converted to eremofortin C and then to PR-toxin. First the conversion of eremofortin A to eremofortin C proceeds by oxidation of the side chain of the molecule at C-12 and is catalyzed by the short-chain oxidoreductase prx1. The cytochrome P450 monooxygenase ORF6 is probably also involved in this step. The primary alcohol formed at C-12 is finally oxidized by the short-chain alcohol dehydrogenase prx4 that forms PR-toxin. This chain is FAD-dependent monooxygenase prx3, found in Penicillium roqueforti (strain FM164).